A 363-amino-acid polypeptide reads, in one-letter code: Dihydroorotate dehydrogenase (quinone) (363 aa).

FMN contacts are provided by residues 70-74 (AGFDK) and threonine 94. Residue lysine 74 coordinates substrate. 119-123 (NRMGF) serves as a coordination point for substrate. Residues asparagine 147 and asparagine 180 each contribute to the FMN site. Residue asparagine 180 coordinates substrate. Serine 183 serves as the catalytic Nucleophile. Substrate is bound at residue asparagine 185. FMN contacts are provided by lysine 216 and threonine 244. 245–246 (NT) contributes to the substrate binding site. FMN is bound by residues glycine 270, glycine 299, and 320–321 (YT).

The protein belongs to the dihydroorotate dehydrogenase family. Type 2 subfamily. In terms of assembly, monomer. Requires FMN as cofactor.

The protein resides in the cell membrane. The enzyme catalyses (S)-dihydroorotate + a quinone = orotate + a quinol. Its pathway is pyrimidine metabolism; UMP biosynthesis via de novo pathway; orotate from (S)-dihydroorotate (quinone route): step 1/1. Functionally, catalyzes the conversion of dihydroorotate to orotate with quinone as electron acceptor. In Corynebacterium diphtheriae (strain ATCC 700971 / NCTC 13129 / Biotype gravis), this protein is Dihydroorotate dehydrogenase (quinone).